Consider the following 194-residue polypeptide: 7-methyl-GTP pyrophosphatase (194 aa).

Catalysis depends on Asp-69, which acts as the Proton acceptor.

Belongs to the Maf family. YceF subfamily. A divalent metal cation serves as cofactor.

The protein localises to the cytoplasm. It carries out the reaction N(7)-methyl-GTP + H2O = N(7)-methyl-GMP + diphosphate + H(+). Functionally, nucleoside triphosphate pyrophosphatase that hydrolyzes 7-methyl-GTP (m(7)GTP). May have a dual role in cell division arrest and in preventing the incorporation of modified nucleotides into cellular nucleic acids. In Sodalis glossinidius (strain morsitans), this protein is 7-methyl-GTP pyrophosphatase.